An 83-amino-acid chain; its full sequence is UPF0248 protein PYRAB10580 (83 aa).

It belongs to the UPF0248 family.

The polypeptide is UPF0248 protein PYRAB10580 (Pyrococcus abyssi (strain GE5 / Orsay)).